Reading from the N-terminus, the 513-residue chain is Serine/threonine-protein kinase pakH (513 aa).

Residues 42–294 (FEIQEKLGEG…PSQLLDHPFI (253 aa)) form the Protein kinase domain. ATP contacts are provided by residues 48–56 (LGEGSFGSV) and K71. D163 acts as the Proton acceptor in catalysis. The tract at residues 313–358 (KSKKRKSIGPSVSPKQQPNDNNNNNNNNKPQFLSKLLNNNSNSSND) is disordered. Residues 331 to 357 (NDNNNNNNNNKPQFLSKLLNNNSNSSN) show a composition bias toward low complexity. A helical membrane pass occupies residues 493–512 (IVLYSTLGLILVLSVFFKFF).

Belongs to the protein kinase superfamily. STE Ser/Thr protein kinase family. STE20 subfamily. Requires Mg(2+) as cofactor.

The protein resides in the membrane. It catalyses the reaction L-seryl-[protein] + ATP = O-phospho-L-seryl-[protein] + ADP + H(+). The catalysed reaction is L-threonyl-[protein] + ATP = O-phospho-L-threonyl-[protein] + ADP + H(+). The polypeptide is Serine/threonine-protein kinase pakH (pakH-1) (Dictyostelium discoideum (Social amoeba)).